Reading from the N-terminus, the 643-residue chain is Protein disulfide-isomerase A4 (643 aa).

Positions Met-1 to Ala-20 are cleaved as a signal peptide. Thioredoxin domains follow at residues Val-21–Gln-168 and Asn-170–Lys-300. The interval Ala-24–Asp-54 is disordered. Acidic residues predominate over residues Pro-27–Asp-54. The CXXC motif lies at Cys-90–Cys-93. Disulfide bonds link Cys-90-Cys-93 and Cys-205-Cys-208. Lys-365 is subject to N6-acetyllysine. The Thioredoxin 3 domain occupies Phe-503–Thr-634. Residues Cys-553–Cys-556 carry the CXXC motif. The cysteines at positions 553 and 556 are disulfide-linked. The short motif at Lys-640–Leu-643 is the Prevents secretion from ER element.

The protein belongs to the protein disulfide isomerase family. As to quaternary structure, part of a large chaperone multiprotein complex comprising DNAJB11, HSP90B1, HSPA5, HYOU, PDIA2, PDIA4, PDIA6, PPIB, SDF2L1, UGGT1 and very small amounts of ERP29, but not, or at very low levels, CALR nor CANX. Component of a complex containing at least CRELD2, MANF, MATN3 and PDIA4.

It is found in the endoplasmic reticulum lumen. It localises to the melanosome. It catalyses the reaction Catalyzes the rearrangement of -S-S- bonds in proteins.. This Bos taurus (Bovine) protein is Protein disulfide-isomerase A4 (PDIA4).